The chain runs to 94 residues: MFGRLGAPEIILILVVIILLFGAKKLPDMARSLGKSARILKSEAKAMKSEGQESTPAGPPNTDEQPPAQRTIQAAPGDVTSSRPVSEPTDTTKR.

A helical transmembrane segment spans residues 1 to 21 (MFGRLGAPEIILILVVIILLF). The interval 44–94 (AKAMKSEGQESTPAGPPNTDEQPPAQRTIQAAPGDVTSSRPVSEPTDTTKR) is disordered. A compositionally biased stretch (polar residues) spans 62 to 72 (TDEQPPAQRTI).

This sequence belongs to the TatA/E family. As to quaternary structure, the Tat system comprises two distinct complexes: a TatABC complex, containing multiple copies of TatA, TatB and TatC subunits, and a separate TatA complex, containing only TatA subunits. Substrates initially bind to the TatABC complex, which probably triggers association of the separate TatA complex to form the active translocon.

Its subcellular location is the cell membrane. Its function is as follows. Part of the twin-arginine translocation (Tat) system that transports large folded proteins containing a characteristic twin-arginine motif in their signal peptide across membranes. TatA could form the protein-conducting channel of the Tat system. This Streptomyces avermitilis (strain ATCC 31267 / DSM 46492 / JCM 5070 / NBRC 14893 / NCIMB 12804 / NRRL 8165 / MA-4680) protein is Sec-independent protein translocase protein TatA.